The following is a 460-amino-acid chain: Hydroxyproline dehydrogenase (460 aa).

An N6-acetyllysine modification is found at Lys310.

This sequence belongs to the proline oxidase family. Requires FAD as cofactor.

The enzyme catalyses trans-4-hydroxy-L-proline + a quinone = (3R,5S)-1-pyrroline-3-hydroxy-5-carboxylate + a quinol + H(+). The catalysed reaction is L-proline + a quinone = (S)-1-pyrroline-5-carboxylate + a quinol + H(+). Its activity is regulated as follows. Hydroproxyproline dehydrogenase activity is inhibited by THFA,(1R,3R)3-OH-cyclopentane-COOH and 5-OH-1H-pyrazole-3-COOH. In terms of biological role, dehydrogenase that converts trans-4-L-hydroxyproline to delta-1-pyrroline-3-hydroxy-5-carboxylate (Hyp) using ubiquinone-10 as the terminal electron acceptor. Can also use proline as a substrate but with a very much lower efficiency. Does not react with other diastereomers of Hyp: trans-4-D-hydroxyproline and cis-4-L-hydroxyproline. Ubiquininone analogs such as menadione, duroquinone and ubiquinone-1 react more efficiently than oxygen as the terminal electron acceptor during catalysis. This chain is Hydroxyproline dehydrogenase, found in Homo sapiens (Human).